The chain runs to 72 residues: Translation initiation factor IF-1 (72 aa).

The region spanning 1-72 (MAKEDVIEMQ…SKGRIVFRAR (72 aa)) is the S1-like domain.

Belongs to the IF-1 family. As to quaternary structure, component of the 30S ribosomal translation pre-initiation complex which assembles on the 30S ribosome in the order IF-2 and IF-3, IF-1 and N-formylmethionyl-tRNA(fMet); mRNA recruitment can occur at any time during PIC assembly.

The protein localises to the cytoplasm. In terms of biological role, one of the essential components for the initiation of protein synthesis. Stabilizes the binding of IF-2 and IF-3 on the 30S subunit to which N-formylmethionyl-tRNA(fMet) subsequently binds. Helps modulate mRNA selection, yielding the 30S pre-initiation complex (PIC). Upon addition of the 50S ribosomal subunit IF-1, IF-2 and IF-3 are released leaving the mature 70S translation initiation complex. The protein is Translation initiation factor IF-1 of Pseudoalteromonas translucida (strain TAC 125).